We begin with the raw amino-acid sequence, 222 residues long: Thiamine-phosphate synthase (222 aa).

Residues 44–48 (QVRMK) and asparagine 75 each bind 4-amino-2-methyl-5-(diphosphooxymethyl)pyrimidine. Mg(2+) contacts are provided by aspartate 76 and aspartate 95. Residue threonine 114 coordinates 4-amino-2-methyl-5-(diphosphooxymethyl)pyrimidine. A 2-[(2R,5Z)-2-carboxy-4-methylthiazol-5(2H)-ylidene]ethyl phosphate-binding site is contributed by 140-142 (SRS). Lysine 143 contributes to the 4-amino-2-methyl-5-(diphosphooxymethyl)pyrimidine binding site. A 2-[(2R,5Z)-2-carboxy-4-methylthiazol-5(2H)-ylidene]ethyl phosphate-binding site is contributed by glycine 171.

This sequence belongs to the thiamine-phosphate synthase family. Requires Mg(2+) as cofactor.

The enzyme catalyses 2-[(2R,5Z)-2-carboxy-4-methylthiazol-5(2H)-ylidene]ethyl phosphate + 4-amino-2-methyl-5-(diphosphooxymethyl)pyrimidine + 2 H(+) = thiamine phosphate + CO2 + diphosphate. The catalysed reaction is 2-(2-carboxy-4-methylthiazol-5-yl)ethyl phosphate + 4-amino-2-methyl-5-(diphosphooxymethyl)pyrimidine + 2 H(+) = thiamine phosphate + CO2 + diphosphate. It carries out the reaction 4-methyl-5-(2-phosphooxyethyl)-thiazole + 4-amino-2-methyl-5-(diphosphooxymethyl)pyrimidine + H(+) = thiamine phosphate + diphosphate. It participates in cofactor biosynthesis; thiamine diphosphate biosynthesis; thiamine phosphate from 4-amino-2-methyl-5-diphosphomethylpyrimidine and 4-methyl-5-(2-phosphoethyl)-thiazole: step 1/1. In terms of biological role, condenses 4-methyl-5-(beta-hydroxyethyl)thiazole monophosphate (THZ-P) and 2-methyl-4-amino-5-hydroxymethyl pyrimidine pyrophosphate (HMP-PP) to form thiamine monophosphate (TMP). This Anaeromyxobacter dehalogenans (strain 2CP-C) protein is Thiamine-phosphate synthase.